Here is a 295-residue protein sequence, read N- to C-terminus: MTHLFEGVGVALTTPFTNNKINIEALKTHVNFLLENNAQAIIVNGTTAESPTLTTDEKERILKTVIDLVDKRVPVIAGTGTNDTEKSIQASIQAKALGADAIMLITPYYNKTNQRGLVKHFEAIADAVKLPVVLYNVPSRTNMTIEPETVEILSQHPYIVALKDATNDFEYLEEVKKRIDTNSFALYSGNDDNVVEYYQRGGQGVISVIANVIPKEFQALYDAQQSGLDIQDQFKPIGTLLSALSVDINPIPIKALTSYLGFGNYELRLPLVSLEDTDTKVLREAYDTFKAGENE.

Position 47 (T47) interacts with pyruvate. Y135 acts as the Proton donor/acceptor in catalysis. K163 serves as the catalytic Schiff-base intermediate with substrate. I206 lines the pyruvate pocket.

The protein belongs to the DapA family. As to quaternary structure, homodimer.

The protein resides in the cytoplasm. It catalyses the reaction L-aspartate 4-semialdehyde + pyruvate = (2S,4S)-4-hydroxy-2,3,4,5-tetrahydrodipicolinate + H2O + H(+). Its pathway is amino-acid biosynthesis; L-lysine biosynthesis via DAP pathway; (S)-tetrahydrodipicolinate from L-aspartate: step 3/4. Its function is as follows. Catalyzes the condensation of (S)-aspartate-beta-semialdehyde [(S)-ASA] and pyruvate to 4-hydroxy-tetrahydrodipicolinate (HTPA). The polypeptide is 4-hydroxy-tetrahydrodipicolinate synthase (Staphylococcus aureus (strain MSSA476)).